We begin with the raw amino-acid sequence, 150 residues long: Ribosome maturation factor RimP (150 aa).

This sequence belongs to the RimP family.

The protein localises to the cytoplasm. In terms of biological role, required for maturation of 30S ribosomal subunits. In Methylococcus capsulatus (strain ATCC 33009 / NCIMB 11132 / Bath), this protein is Ribosome maturation factor RimP.